Here is a 261-residue protein sequence, read N- to C-terminus: 3-methyl-2-oxobutanoate hydroxymethyltransferase (261 aa).

Positions 42 and 81 each coordinate Mg(2+). 3-methyl-2-oxobutanoate-binding positions include 42–43 (DS), Asp-81, and Lys-110. Glu-112 lines the Mg(2+) pocket. Glu-179 (proton acceptor) is an active-site residue.

The protein belongs to the PanB family. As to quaternary structure, homodecamer; pentamer of dimers. Requires Mg(2+) as cofactor.

The protein resides in the cytoplasm. The catalysed reaction is 3-methyl-2-oxobutanoate + (6R)-5,10-methylene-5,6,7,8-tetrahydrofolate + H2O = 2-dehydropantoate + (6S)-5,6,7,8-tetrahydrofolate. Its pathway is cofactor biosynthesis; (R)-pantothenate biosynthesis; (R)-pantoate from 3-methyl-2-oxobutanoate: step 1/2. Functionally, catalyzes the reversible reaction in which hydroxymethyl group from 5,10-methylenetetrahydrofolate is transferred onto alpha-ketoisovalerate to form ketopantoate. The sequence is that of 3-methyl-2-oxobutanoate hydroxymethyltransferase from Thermus thermophilus (strain ATCC 27634 / DSM 579 / HB8).